The following is a 160-amino-acid chain: Adenosine 5'-monophosphoramidase HINT3 (160 aa).

An HIT domain is found at Ile24 to Trp132. Residues Asp50 to Ile51 and His119 to His121 contribute to the AMP site. The Histidine triad motif signature appears at His117–His121. The active-site Tele-AMP-histidine intermediate is His119.

This sequence belongs to the HINT family. Forms dimers to octamers and even larger oligomer.

It localises to the cytoplasm. The protein localises to the nucleus. It carries out the reaction adenosine 5'-phosphoramidate + H2O = AMP + NH4(+). Exhibits adenosine 5'-monophosphoramidase activity, hydrolyzing purine nucleotide phosphoramidates with a single phosphate group such as adenosine 5'monophosphoramidate (AMP-NH2) to yield AMP and NH2. Hydrolyzes lysyl-AMP (AMP-N-epsilon-(N-alpha-acetyl lysine methyl ester)) generated by lysine tRNA ligase. This is Adenosine 5'-monophosphoramidase HINT3 (hint3) from Danio rerio (Zebrafish).